Reading from the N-terminus, the 511-residue chain is Xylose import ATP-binding protein XylG (511 aa).

2 consecutive ABC transporter domains span residues 6-244 (LEMR…VGRE) and 261-506 (FEAR…IGKP). Residue 38 to 45 (GENGAGKS) participates in ATP binding.

The protein belongs to the ABC transporter superfamily. Xylose importer (TC 3.A.1.2.4) family. As to quaternary structure, the complex is composed of two ATP-binding proteins (XylG), two transmembrane proteins (XylH) and a solute-binding protein (XylF).

Its subcellular location is the cell inner membrane. The enzyme catalyses D-xylose(out) + ATP + H2O = D-xylose(in) + ADP + phosphate + H(+). Its function is as follows. Part of the ABC transporter complex XylFGH involved in xylose import. Responsible for energy coupling to the transport system. This chain is Xylose import ATP-binding protein XylG, found in Brucella suis biovar 1 (strain 1330).